The following is a 49-amino-acid chain: U-theraphotoxin-Lk2a (49 aa).

Disulfide bonds link Cys4/Cys17, Cys8/Cys41, Cys22/Cys24, and Cys35/Cys46.

This sequence belongs to the neurotoxin 12 (Hwtx-2) family. 04 (lasiotoxin) subfamily. Expressed by the venom gland.

It is found in the secreted. Its function is as follows. Toxin that causes irreversible contractile paralysis into adult Aedes aegypti resulting in 100% mortality after 24 hours. The protein is U-theraphotoxin-Lk2a of Lasiodora klugi (Bahia scarlet tarantula).